The following is an 89-amino-acid chain: cAMP-regulated phosphoprotein 21 (89 aa).

Residues 1 to 89 are disordered; sequence MSEQGDLNQA…GGESLQDQTL (89 aa). S2 is subject to N-acetylserine. Residues 9–25 show a composition bias toward low complexity; the sequence is QAIAEEGGTEQETATPE. S33 is modified (phosphoserine). Basic and acidic residues predominate over residues 40–53; it reads LELQRRLEAQNQER. S56 carries the phosphoserine modification.

Interacts with CALM1. In terms of processing, phosphorylation at Ser-56 favors interaction with CALM1.

It is found in the cytoplasm. Its function is as follows. May act as a competitive inhibitor of calmodulin-dependent enzymes such as calcineurin in neurons. The sequence is that of cAMP-regulated phosphoprotein 21 (ARPP21) from Pongo abelii (Sumatran orangutan).